The chain runs to 520 residues: GMP synthase [glutamine-hydrolyzing] (520 aa).

Positions 9–202 (HVLIVDFGSQ…THKIAGLKGD (194 aa)) constitute a Glutamine amidotransferase type-1 domain. Cysteine 86 serves as the catalytic Nucleophile. Catalysis depends on residues histidine 176 and glutamate 178. Residues 203–395 (WTMKAFREEA…LGLPPQFVGR (193 aa)) enclose the GMPS ATP-PPase domain. 230–236 (SGGVDSS) contacts ATP.

In terms of assembly, homodimer.

The enzyme catalyses XMP + L-glutamine + ATP + H2O = GMP + L-glutamate + AMP + diphosphate + 2 H(+). Its pathway is purine metabolism; GMP biosynthesis; GMP from XMP (L-Gln route): step 1/1. Functionally, catalyzes the synthesis of GMP from XMP. This chain is GMP synthase [glutamine-hydrolyzing], found in Phenylobacterium zucineum (strain HLK1).